Reading from the N-terminus, the 835-residue chain is Cap-specific mRNA (nucleoside-2'-O-)-methyltransferase 1 (835 aa).

Residues 2 to 19 (RRRNDPECTAPIKKQKKR) carry the Bipartite nuclear localization signal motif. Residues 24–68 (ALNLSAASGDEPPSSVNHAAKASTTSLSGSDSETEGKQHGSDSFD) are disordered. Phosphoserine occurs at positions 28, 31, 53, 66, and 91. Positions 37–54 (SSVNHAAKASTTSLSGSD) are enriched in polar residues. The segment covering 57–68 (TEGKQHGSDSFD) has biased composition (basic and acidic residues). Residues 87-133 (YNSVSQKLMAKMGFREGEGLGKYSQGRKDIVEASNQKGRRGLGLTLQ) enclose the G-patch domain. Position 108 is an N6-acetyllysine (K108). Substrate-binding positions include 203–207 (KSVFD) and R218. The RrmJ-type SAM-dependent 2'-O-MTase domain maps to 231-450 (FFLNRAAMKM…ERYVVCKGLK (220 aa)). N234 contacts S-adenosyl-L-methionine. K239 is an active-site residue. Residues 277 to 283 (CAGPGGF) and 335 to 336 (DI) each bind S-adenosyl-L-methionine. D364 is an active-site residue. 374–376 (NLQ) is a binding site for substrate. The Proton acceptor role is filled by K404. N439 provides a ligand contact to substrate. The tract at residues 727 to 835 (SSGTPKLSYT…VLSFIQTHSA (109 aa)) is interaction with POLR2A. Residues 752 to 786 (RTVNEPWTMGFSKSFKRKFFYNKKTKISTFDLPAD) form the WW domain.

In terms of assembly, interacts with POLR2A (via C-terminus).

The protein localises to the nucleus. It carries out the reaction a 5'-end (N(7)-methyl 5'-triphosphoguanosine)-ribonucleoside in mRNA + S-adenosyl-L-methionine = a 5'-end (N(7)-methyl 5'-triphosphoguanosine)-(2'-O-methyl-ribonucleoside) in mRNA + S-adenosyl-L-homocysteine + H(+). Functionally, S-adenosyl-L-methionine-dependent methyltransferase that mediates mRNA cap1 2'-O-ribose methylation to the 5'-cap structure of mRNAs. Methylates the ribose of the first nucleotide of a m(7)GpppG-capped mRNA and small nuclear RNA (snRNA) to produce m(7)GpppRm (cap1). Displays a preference for cap0 transcripts. Cap1 modification is linked to higher levels of translation. May be involved in the interferon response pathway. The sequence is that of Cap-specific mRNA (nucleoside-2'-O-)-methyltransferase 1 (CMTR1) from Ailuropoda melanoleuca (Giant panda).